We begin with the raw amino-acid sequence, 451 residues long: UDP-N-acetylmuramoylalanine--D-glutamate ligase (451 aa).

120-126 (GSNGKTT) serves as a coordination point for ATP.

Belongs to the MurCDEF family.

Its subcellular location is the cytoplasm. The catalysed reaction is UDP-N-acetyl-alpha-D-muramoyl-L-alanine + D-glutamate + ATP = UDP-N-acetyl-alpha-D-muramoyl-L-alanyl-D-glutamate + ADP + phosphate + H(+). The protein operates within cell wall biogenesis; peptidoglycan biosynthesis. Functionally, cell wall formation. Catalyzes the addition of glutamate to the nucleotide precursor UDP-N-acetylmuramoyl-L-alanine (UMA). The sequence is that of UDP-N-acetylmuramoylalanine--D-glutamate ligase (murD) from Bacillus subtilis (strain 168).